The following is a 325-amino-acid chain: DNA-directed RNA polymerase subunit alpha (325 aa).

Residues 1 to 231 (MQTSLLKPKI…DQLSVFAALE (231 aa)) form an alpha N-terminal domain (alpha-NTD) region. Residues 246 to 325 (IDPILLRPVD…ENWPPAGLDK (80 aa)) form an alpha C-terminal domain (alpha-CTD) region.

Belongs to the RNA polymerase alpha chain family. As to quaternary structure, homodimer. The RNAP catalytic core consists of 2 alpha, 1 beta, 1 beta' and 1 omega subunit. When a sigma factor is associated with the core the holoenzyme is formed, which can initiate transcription.

It carries out the reaction RNA(n) + a ribonucleoside 5'-triphosphate = RNA(n+1) + diphosphate. Functionally, DNA-dependent RNA polymerase catalyzes the transcription of DNA into RNA using the four ribonucleoside triphosphates as substrates. This chain is DNA-directed RNA polymerase subunit alpha, found in Burkholderia orbicola (strain MC0-3).